The chain runs to 1483 residues: Guanylyl cyclase, membrane (1483 aa).

6 helical membrane passes run 50–70 (ISII…YISP), 143–163 (FILR…TFTA), 168–188 (LWKL…LIFE), 198–218 (MVLL…PSML), 219–239 (ASGG…QIAG), and 242–262 (MVLL…ISRF). The tract at residues 323 to 376 (KKDEESNLTGKKQSKVVVSPPPPPTAAAPQQQDNEISTPQNSRKIVDPQSPSSL) is disordered. Residues 355-376 (DNEISTPQNSRKIVDPQSPSSL) are compositionally biased toward polar residues. Residues 395–517 (TVLFCEIVNF…DTINTSSRMA (123 aa)) form the Guanylate cyclase 1 domain. 2 disordered regions span residues 598-619 (NNTI…THPN) and 672-838 (LTSP…GDDF). The span at 610–619 (GSATGPTHPN) shows a compositional bias: polar residues. Low complexity-rich tracts occupy residues 672–684 (LTSP…PQQS), 693–712 (SPRL…SSST), and 720–765 (NNNN…NNNN). The segment covering 772 to 786 (SPISQNTTPTGSLSL) has biased composition (polar residues). A run of 6 helical transmembrane segments spans residues 907–927 (ILAS…VDYF), 982–1002 (IITG…YVVS), 1016–1036 (VVMV…SVPP), 1040–1060 (IPLD…CYNF), 1061–1081 (SGIK…FIEI), and 1094–1114 (IYLS…ITSY). The Guanylate cyclase 2 domain maps to 1168–1296 (TIFLSDIVGF…ESVQITQQME (129 aa)). 3 residues coordinate Mg(2+): D1173, I1174, and D1217. Disordered stretches follow at residues 1348–1369 (QPEV…SLQY) and 1393–1483 (NQND…SESS). The segment covering 1354–1369 (RSVSVSKSNFGGSLQY) has biased composition (polar residues). The span at 1405 to 1416 (NENGNESSSSNI) shows a compositional bias: low complexity. The span at 1432–1444 (NEDDESSYEDDQE) shows a compositional bias: acidic residues. Residues 1446–1465 (NQYLNNSENNKNNNNNSNQI) are compositionally biased toward low complexity.

It belongs to the adenylyl cyclase class-4/guanylyl cyclase family. As to quaternary structure, homodimer. Mg(2+) serves as cofactor.

The protein localises to the membrane. It carries out the reaction GTP = 3',5'-cyclic GMP + diphosphate. Its activity is regulated as follows. Activated by guanosine 5'-3-O-(thio)triphosphate (GTPgammaS). Inhibited by calcium. Functionally, synthesizes cyclic GMP (cGMP) from GTP, after activation by heterotrimeric or monomeric G proteins. Involved in chemotaxis. The polypeptide is Guanylyl cyclase, membrane (gca) (Dictyostelium discoideum (Social amoeba)).